A 362-amino-acid chain; its full sequence is Molybdenum import ATP-binding protein ModC (362 aa).

Residues 2 to 236 (ASPIEVRLQM…LDLPLAMGSD (235 aa)) enclose the ABC transporter domain. 34–41 (GPSGSGKT) serves as a coordination point for ATP. The Mop domain maps to 297–362 (QSSILNRLPV…AQIKAVAVLA (66 aa)).

It belongs to the ABC transporter superfamily. Molybdate importer (TC 3.A.1.8) family. In terms of assembly, the complex is composed of two ATP-binding proteins (ModC), two transmembrane proteins (ModB) and a solute-binding protein (ModA).

The protein resides in the cell inner membrane. It catalyses the reaction molybdate(out) + ATP + H2O = molybdate(in) + ADP + phosphate + H(+). Its function is as follows. Part of the ABC transporter complex ModABC involved in molybdenum import. Responsible for energy coupling to the transport system. The polypeptide is Molybdenum import ATP-binding protein ModC (Pseudomonas syringae pv. syringae (strain B728a)).